The sequence spans 178 residues: Bifunctional protein PyrR (178 aa).

The PRPP-binding motif lies at 99-111 (VVLVDDVIYTGRT).

It belongs to the purine/pyrimidine phosphoribosyltransferase family. PyrR subfamily. As to quaternary structure, homodimer and homohexamer; in equilibrium.

The enzyme catalyses UMP + diphosphate = 5-phospho-alpha-D-ribose 1-diphosphate + uracil. In terms of biological role, regulates transcriptional attenuation of the pyrimidine nucleotide (pyr) operon by binding in a uridine-dependent manner to specific sites on pyr mRNA. This disrupts an antiterminator hairpin in the RNA and favors formation of a downstream transcription terminator, leading to a reduced expression of downstream genes. Its function is as follows. Also displays a weak uracil phosphoribosyltransferase activity which is not physiologically significant. The sequence is that of Bifunctional protein PyrR from Thermoanaerobacter pseudethanolicus (strain ATCC 33223 / 39E) (Clostridium thermohydrosulfuricum).